Consider the following 96-residue polypeptide: UPF0235 protein ESA_00387 (96 aa).

Belongs to the UPF0235 family.

This chain is UPF0235 protein ESA_00387, found in Cronobacter sakazakii (strain ATCC BAA-894) (Enterobacter sakazakii).